An 847-amino-acid polypeptide reads, in one-letter code: Glucans biosynthesis glucosyltransferase H (847 aa).

Residues 1–138 (MNKTTEYIDA…KWRTVGTIRR (138 aa)) are Cytoplasmic-facing. Residues 139-156 (YILLILTLAQTVVATWYM) form a helical membrane-spanning segment. Residues 157–193 (KTILPYQGWALINPMDMVGQDVWVSFMQLLPYMLQTG) are Periplasmic-facing. Residues 194–216 (ILILFAVLFCWVSAGFWTALMGF) form a helical membrane-spanning segment. Residues 217-511 (LQLLIGRDKY…LVKGMHPVHR (295 aa)) are Cytoplasmic-facing. Residues 512–534 (AVFLTGVMSYLSAPLWFMFLALS) traverse the membrane as a helical segment. Residues 535 to 567 (TALQVVHALTEPQYFLQPRQLFPVWPQWRPELA) lie on the Periplasmic side of the membrane. A helical membrane pass occupies residues 568 to 590 (IALFASTMVLLFLPKLLSILLIW). The Cytoplasmic portion of the chain corresponds to 591 to 602 (CKGTKEYGGFWR). Residues 603 to 625 (VTLSLLLEVLFSVLLAPVRMLFH) traverse the membrane as a helical segment. Residues 626–679 (TVFVVSAFLGWEVVWNSPQRDDDSTSWGEAFKRHGSQLLLGLVWAVGMAWLDLR) are Periplasmic-facing. A helical membrane pass occupies residues 680 to 702 (FLFWLAPIVFSLILSPFVSVISS). Residues 703–847 (RATVGLRTKR…ALRKPDAASQ (145 aa)) are Cytoplasmic-facing.

The protein belongs to the glycosyltransferase 2 family. OpgH subfamily.

The protein localises to the cell inner membrane. It functions in the pathway glycan metabolism; osmoregulated periplasmic glucan (OPG) biosynthesis. Functionally, involved in the biosynthesis of osmoregulated periplasmic glucans (OPGs). The chain is Glucans biosynthesis glucosyltransferase H from Escherichia coli O6:H1 (strain CFT073 / ATCC 700928 / UPEC).